We begin with the raw amino-acid sequence, 103 residues long: Large ribosomal subunit protein uL24 (103 aa).

It belongs to the universal ribosomal protein uL24 family. In terms of assembly, part of the 50S ribosomal subunit.

One of two assembly initiator proteins, it binds directly to the 5'-end of the 23S rRNA, where it nucleates assembly of the 50S subunit. In terms of biological role, one of the proteins that surrounds the polypeptide exit tunnel on the outside of the subunit. The chain is Large ribosomal subunit protein uL24 from Christiangramia forsetii (strain DSM 17595 / CGMCC 1.15422 / KT0803) (Gramella forsetii).